The primary structure comprises 87 residues: Phosphoribosyl-ATP pyrophosphatase (87 aa).

Belongs to the PRA-PH family.

The protein resides in the cytoplasm. It carries out the reaction 1-(5-phospho-beta-D-ribosyl)-ATP + H2O = 1-(5-phospho-beta-D-ribosyl)-5'-AMP + diphosphate + H(+). Its pathway is amino-acid biosynthesis; L-histidine biosynthesis; L-histidine from 5-phospho-alpha-D-ribose 1-diphosphate: step 2/9. In Pseudarthrobacter chlorophenolicus (strain ATCC 700700 / DSM 12829 / CIP 107037 / JCM 12360 / KCTC 9906 / NCIMB 13794 / A6) (Arthrobacter chlorophenolicus), this protein is Phosphoribosyl-ATP pyrophosphatase.